The sequence spans 193 residues: Holliday junction branch migration complex subunit RuvA (193 aa).

Residues 1 to 64 (MIGRIAGTLI…EDAHLLYGFG (64 aa)) form a domain I region. Residues 65–143 (TAAERETFRQ…ADLGTVPGGP (79 aa)) are domain II. The segment at 144-151 (AVSDDAVD) is flexible linker. The domain III stretch occupies residues 151–193 (DVLNALLALGYSDKEAALAIKQVPAGTGVSEGIKLALKALSKG).

It belongs to the RuvA family. As to quaternary structure, homotetramer. Forms an RuvA(8)-RuvB(12)-Holliday junction (HJ) complex. HJ DNA is sandwiched between 2 RuvA tetramers; dsDNA enters through RuvA and exits via RuvB. An RuvB hexamer assembles on each DNA strand where it exits the tetramer. Each RuvB hexamer is contacted by two RuvA subunits (via domain III) on 2 adjacent RuvB subunits; this complex drives branch migration. In the full resolvosome a probable DNA-RuvA(4)-RuvB(12)-RuvC(2) complex forms which resolves the HJ.

The protein resides in the cytoplasm. The RuvA-RuvB-RuvC complex processes Holliday junction (HJ) DNA during genetic recombination and DNA repair, while the RuvA-RuvB complex plays an important role in the rescue of blocked DNA replication forks via replication fork reversal (RFR). RuvA specifically binds to HJ cruciform DNA, conferring on it an open structure. The RuvB hexamer acts as an ATP-dependent pump, pulling dsDNA into and through the RuvAB complex. HJ branch migration allows RuvC to scan DNA until it finds its consensus sequence, where it cleaves and resolves the cruciform DNA. This chain is Holliday junction branch migration complex subunit RuvA, found in Ralstonia pickettii (strain 12J).